Consider the following 410-residue polypeptide: Lipoyl synthase, mitochondrial (410 aa).

[4Fe-4S] cluster contacts are provided by C125, C130, C136, C157, C161, C164, and S373. The region spanning 140–362 (SDEEGTATAT…EKEAMDMGFL (223 aa)) is the Radical SAM core domain.

The protein belongs to the radical SAM superfamily. Lipoyl synthase family. Requires [4Fe-4S] cluster as cofactor.

The protein localises to the mitochondrion. It carries out the reaction [[Fe-S] cluster scaffold protein carrying a second [4Fe-4S](2+) cluster] + N(6)-octanoyl-L-lysyl-[protein] + 2 oxidized [2Fe-2S]-[ferredoxin] + 2 S-adenosyl-L-methionine + 4 H(+) = [[Fe-S] cluster scaffold protein] + N(6)-[(R)-dihydrolipoyl]-L-lysyl-[protein] + 4 Fe(3+) + 2 hydrogen sulfide + 2 5'-deoxyadenosine + 2 L-methionine + 2 reduced [2Fe-2S]-[ferredoxin]. It participates in protein modification; protein lipoylation via endogenous pathway; protein N(6)-(lipoyl)lysine from octanoyl-[acyl-carrier-protein]: step 2/2. Catalyzes the radical-mediated insertion of two sulfur atoms into the C-6 and C-8 positions of the octanoyl moiety bound to the lipoyl domains of lipoate-dependent enzymes, thereby converting the octanoylated domains into lipoylated derivatives. The sequence is that of Lipoyl synthase, mitochondrial from Leishmania major.